A 300-amino-acid polypeptide reads, in one-letter code: MSWLTEYVRPKIRGLLKREVPDNLWTNCESCSQMILVKDLQKAMNVCPHCGHHMRASVAERFGWTFDEGTFTRIELPKVPVDPLSFRDRKRYTERLKDERSKSQLDESMAVAHGRIGGHDAVVAVMAFEFIAGTMGAALGEAFLAAARLAILQKAPLVVFTASGGARMQEGMVSLMQMPRTTVAVQMLRDAGLPYIVVLTNPTTGGVTASFAMLGDVQISEPNALIGFAGQRVIEDTVREKLPEGFQRAEYLLDHGMIDMVVKRPALPEMLGRLIGLMNHRHVNAPGAALGGAAPVRPAA.

Residues 24-293 (LWTNCESCSQ…NAPGAALGGA (270 aa)) enclose the CoA carboxyltransferase N-terminal domain. Zn(2+) is bound by residues C28, C31, C47, and C50. Residues 28 to 50 (CESCSQMILVKDLQKAMNVCPHC) form a C4-type zinc finger.

Belongs to the AccD/PCCB family. Acetyl-CoA carboxylase is a heterohexamer composed of biotin carboxyl carrier protein (AccB), biotin carboxylase (AccC) and two subunits each of ACCase subunit alpha (AccA) and ACCase subunit beta (AccD). Zn(2+) is required as a cofactor.

It localises to the cytoplasm. It catalyses the reaction N(6)-carboxybiotinyl-L-lysyl-[protein] + acetyl-CoA = N(6)-biotinyl-L-lysyl-[protein] + malonyl-CoA. Its pathway is lipid metabolism; malonyl-CoA biosynthesis; malonyl-CoA from acetyl-CoA: step 1/1. Functionally, component of the acetyl coenzyme A carboxylase (ACC) complex. Biotin carboxylase (BC) catalyzes the carboxylation of biotin on its carrier protein (BCCP) and then the CO(2) group is transferred by the transcarboxylase to acetyl-CoA to form malonyl-CoA. This chain is Acetyl-coenzyme A carboxylase carboxyl transferase subunit beta, found in Gluconacetobacter diazotrophicus (strain ATCC 49037 / DSM 5601 / CCUG 37298 / CIP 103539 / LMG 7603 / PAl5).